The chain runs to 147 residues: Hemoglobin subunit beta-1 (147 aa).

One can recognise a Globin domain in the interval 3–147 (EWTDKERSII…VVSALGKQYH (145 aa)). Heme b is bound by residues histidine 64 and histidine 93.

This sequence belongs to the globin family. As to quaternary structure, heterotetramer of two alpha chains and two beta chains. As to expression, red blood cells.

Its function is as follows. Involved in oxygen transport from gills to the various peripheral tissues. The sequence is that of Hemoglobin subunit beta-1 (hbb1) from Pagothenia borchgrevinki (Bald rockcod).